The chain runs to 431 residues: 5-methylthioadenosine/S-adenosylhomocysteine deaminase (431 aa).

Residues His63 and His65 each contribute to the Zn(2+) site. Positions 92, 144, and 184 each coordinate substrate. His211 contacts Zn(2+). Residues Glu214 and Asp299 each contribute to the substrate site. Residue Asp299 participates in Zn(2+) binding.

It belongs to the metallo-dependent hydrolases superfamily. MTA/SAH deaminase family. Zn(2+) is required as a cofactor.

It carries out the reaction S-adenosyl-L-homocysteine + H2O + H(+) = S-inosyl-L-homocysteine + NH4(+). The catalysed reaction is S-methyl-5'-thioadenosine + H2O + H(+) = S-methyl-5'-thioinosine + NH4(+). Its function is as follows. Catalyzes the deamination of 5-methylthioadenosine and S-adenosyl-L-homocysteine into 5-methylthioinosine and S-inosyl-L-homocysteine, respectively. Is also able to deaminate adenosine. This chain is 5-methylthioadenosine/S-adenosylhomocysteine deaminase, found in Thermoanaerobacter pseudethanolicus (strain ATCC 33223 / 39E) (Clostridium thermohydrosulfuricum).